The sequence spans 494 residues: Sugar phosphate exchanger 3 (494 aa).

The helical transmembrane segment at 10 to 30 threads the bilayer; the sequence is GALLTSFSHHHLAVFLLTFFS. The N-linked (GlcNAc...) asparagine glycan is linked to Asn-58. 5 consecutive transmembrane segments (helical) span residues 81–101, 113–133, 146–166, 177–197, and 209–229; these read TLFLGTLDTVFLFSYAVGLFI, WVLSFGMCSSAFVVFVFGTLT, GLWIVNGLLQSTGWPCVVAVM, VVFGLWSACASVGNILGAFLA, and FLVTASVQFAGGIIIFFGLLV. Residues 240–261 form a disordered region; sequence GAEESSEEDSQRPLIDGAENED. The next 6 membrane-spanning stretches (helical) occupy residues 297 to 317, 333 to 353, 357 to 377, 386 to 406, 428 to 448, and 457 to 477; these read LAYACLKLVNYSFFFWLPFYL, IWYDVGGIIGGTLLGFISDVL, APVLALSLFLAVWSLVGYSRS, LLMTITGFFIGGPSNMVSSAI, GIVDGTGSIGAAVGQYLVSLI, and VFYFFILMTSCTILFILPLIV.

This sequence belongs to the major facilitator superfamily. Organophosphate:Pi antiporter (OPA) (TC 2.A.1.4) family. As to quaternary structure, interacts with ATRAID; the interaction is direct and both proteins are mutually dependent for their stability. Glycosylated.

The protein localises to the endoplasmic reticulum membrane. The protein resides in the lysosome membrane. Unlike the other SLC37 members, lacks glucose-6-phosphate antiporter activity. In osteoclasts, forms a transporter complex with ATRAID for nitrogen-containing-bisphophonates (N-BPs) required for releasing N-BP molecules that have trafficked to lysosomes through fluid-phase endocytosis into the cytosol. The chain is Sugar phosphate exchanger 3 (Slc37a3) from Mus musculus (Mouse).